A 160-amino-acid polypeptide reads, in one-letter code: MGVTKKPDLNDPVLRAKLAKGMGHNYYGEPAWPNDLLYIFPVVILGTIACNVGLAVLEPSMIGEPADPFATPLEILPEWYFFPVFQILRTVPNKLLGVLLMVSVPVGLLTVPFLENVNKFQNPFRRPVATTVFLIGTAVALWLGIGATLPIDKSLTLGLF.

3 consecutive transmembrane segments (helical) span residues 36–56 (LLYI…GLAV), 95–115 (LLGV…PFLE), and 131–151 (TVFL…TLPI).

This sequence belongs to the cytochrome b family. PetD subfamily. The 4 large subunits of the cytochrome b6-f complex are cytochrome b6, subunit IV (17 kDa polypeptide, petD), cytochrome f and the Rieske protein, while the 4 small subunits are petG, petL, petM and petN. The complex functions as a dimer.

Its subcellular location is the plastid. It is found in the chloroplast thylakoid membrane. Its function is as follows. Component of the cytochrome b6-f complex, which mediates electron transfer between photosystem II (PSII) and photosystem I (PSI), cyclic electron flow around PSI, and state transitions. This chain is Cytochrome b6-f complex subunit 4, found in Daucus carota (Wild carrot).